The sequence spans 861 residues: Probable linoleate 9S-lipoxygenase 3 (861 aa).

In terms of domain architecture, PLAT spans phenylalanine 33–alanine 160. Residues proline 163–isoleucine 861 form the Lipoxygenase domain. Residues threonine 220 to glutamate 247 form a disordered region. Fe cation-binding residues include histidine 522, histidine 527, histidine 713, asparagine 717, and isoleucine 861.

It belongs to the lipoxygenase family. In terms of assembly, monomer. Requires Fe cation as cofactor. As to expression, expressed in tubers and roots. Not detected in leaves, flowers, stems, shoot tips, or axillary buds.

It localises to the cytoplasm. The catalysed reaction is (9Z,12Z)-octadecadienoate + O2 = (9S)-hydroperoxy-(10E,12Z)-octadecadienoate. The protein operates within lipid metabolism; oxylipin biosynthesis. In terms of biological role, plant lipoxygenases may be involved in a number of diverse aspects of plant physiology including growth and development, pest resistance, and senescence or responses to wounding. Catalyzes the hydroperoxidation of lipids containing a cis,cis-1,4-pentadiene structure. This is Probable linoleate 9S-lipoxygenase 3 (LOX1.3) from Solanum tuberosum (Potato).